A 327-amino-acid polypeptide reads, in one-letter code: DNA-directed RNA polymerase subunit alpha (327 aa).

The tract at residues 1–233 (MVREKVKVST…NLFIPFLHVE (233 aa)) is alpha N-terminal domain (alpha-NTD). Residues 265 to 327 (KELAFQYIFI…KKILDILEKK (63 aa)) form an alpha C-terminal domain (alpha-CTD) region.

It belongs to the RNA polymerase alpha chain family. In plastids the minimal PEP RNA polymerase catalytic core is composed of four subunits: alpha, beta, beta', and beta''. When a (nuclear-encoded) sigma factor is associated with the core the holoenzyme is formed, which can initiate transcription.

Its subcellular location is the plastid. The protein resides in the chloroplast. The catalysed reaction is RNA(n) + a ribonucleoside 5'-triphosphate = RNA(n+1) + diphosphate. Its function is as follows. DNA-dependent RNA polymerase catalyzes the transcription of DNA into RNA using the four ribonucleoside triphosphates as substrates. The sequence is that of DNA-directed RNA polymerase subunit alpha from Olimarabidopsis pumila (Dwarf rocket).